The chain runs to 146 residues: UPF0260 protein Sbal_1871 (146 aa).

Belongs to the UPF0260 family.

The chain is UPF0260 protein Sbal_1871 from Shewanella baltica (strain OS155 / ATCC BAA-1091).